Consider the following 445-residue polypeptide: Histone acetyltransferase of the MYST family 2 (445 aa).

A compositionally biased stretch (polar residues) spans 1-23 (MGSSANTETNGNAPPPSSNQKPP). The segment at 1-58 (MGSSANTETNGNAPPPSSNQKPPATNGVDGSHPPPPPLTPDQAIIESDPSKKRKMGML) is disordered. The 59-residue stretch at 60–118 (LEVGTRVMCRWRDGKHHPVKVIERRRIHNGGQNDYEYYVHYTEFNRRLDEWTQLDQLDL) folds into the Tudor-knot domain. Residues 169-440 (TKVKNISTIE…VDASKLIWTP (272 aa)) form the MYST-type HAT domain. The segment at 202 to 227 (LFFCEFCLNFMKRKEQLQRHMRKCDL) adopts a C2HC MYST-type zinc-finger fold. Lys-269 is subject to N6-acetyllysine; by autocatalysis. Acetyl-CoA contacts are provided by residues 312 to 314 (ILT) and 319 to 325 (QRKGYGK). Residue Glu-345 is the Proton donor/acceptor of the active site. Position 349 (Ser-349) interacts with acetyl-CoA.

The protein belongs to the MYST (SAS/MOZ) family. Interacts with MRG1 and MRG2. Post-translationally, autoacetylation at Lys-269 is required for proper function. Expressed in cotyledons, leaves, stems, roots and, at higher levels in developing flowers, particularly in the anthers and gynoecia. Constitutively expressed in all tissues, predominantly in shoot apical meristem.

Its subcellular location is the nucleus. The enzyme catalyses L-lysyl-[protein] + acetyl-CoA = N(6)-acetyl-L-lysyl-[protein] + CoA + H(+). In terms of biological role, histone acetyltransferase which may be involved in transcriptional activation. Acetylates 'Lys-5' of histone H4 (H4K5ac). Essential for gametophyte development. Negative regulator of flowering controlling the H4K5ac levels in the FLC chromatin. The sequence is that of Histone acetyltransferase of the MYST family 2 from Arabidopsis thaliana (Mouse-ear cress).